The following is a 222-amino-acid chain: Phosphoribosylformylglycinamidine synthase subunit PurQ (222 aa).

The Glutamine amidotransferase type-1 domain occupies 3–222; that stretch reads AAVVVFPGSN…RALAGALTPA (220 aa). The active-site Nucleophile is the Cys-86. Catalysis depends on residues His-194 and Glu-196.

As to quaternary structure, part of the FGAM synthase complex composed of 1 PurL, 1 PurQ and 2 PurS subunits.

It is found in the cytoplasm. It carries out the reaction N(2)-formyl-N(1)-(5-phospho-beta-D-ribosyl)glycinamide + L-glutamine + ATP + H2O = 2-formamido-N(1)-(5-O-phospho-beta-D-ribosyl)acetamidine + L-glutamate + ADP + phosphate + H(+). It catalyses the reaction L-glutamine + H2O = L-glutamate + NH4(+). The protein operates within purine metabolism; IMP biosynthesis via de novo pathway; 5-amino-1-(5-phospho-D-ribosyl)imidazole from N(2)-formyl-N(1)-(5-phospho-D-ribosyl)glycinamide: step 1/2. Part of the phosphoribosylformylglycinamidine synthase complex involved in the purines biosynthetic pathway. Catalyzes the ATP-dependent conversion of formylglycinamide ribonucleotide (FGAR) and glutamine to yield formylglycinamidine ribonucleotide (FGAM) and glutamate. The FGAM synthase complex is composed of three subunits. PurQ produces an ammonia molecule by converting glutamine to glutamate. PurL transfers the ammonia molecule to FGAR to form FGAM in an ATP-dependent manner. PurS interacts with PurQ and PurL and is thought to assist in the transfer of the ammonia molecule from PurQ to PurL. The sequence is that of Phosphoribosylformylglycinamidine synthase subunit PurQ from Ruegeria pomeroyi (strain ATCC 700808 / DSM 15171 / DSS-3) (Silicibacter pomeroyi).